The primary structure comprises 201 residues: Transgelin (201 aa).

N-acetylalanine is present on Ala2. The 114-residue stretch at 24–137 folds into the Calponin-homology (CH) domain; that stretch reads EELEERLVEW…RTLMALGSLA (114 aa). Ser166 is modified (phosphoserine). The residue at position 172 (Lys172) is an N6-acetyllysine. The stretch at 175-200 is one Calponin-like repeat; that stretch reads IGLQMGSNRGASQAGMTGYGRPRQII. Ser181 carries the post-translational modification Phosphoserine. Arg183 is subject to Omega-N-methylarginine.

Belongs to the calponin family.

It localises to the cytoplasm. In terms of biological role, actin cross-linking/gelling protein. This is Transgelin (Tagln) from Mus musculus (Mouse).